The chain runs to 61 residues: Large ribosomal subunit protein bL32c (61 aa).

Positions 37-61 (SRSFSSGNEHPKPKGFSGQQQQTNK) are disordered.

Belongs to the bacterial ribosomal protein bL32 family.

Its subcellular location is the plastid. It localises to the chloroplast. The protein is Large ribosomal subunit protein bL32c of Agrostis stolonifera (Creeping bentgrass).